The chain runs to 677 residues: Protein hook (677 aa).

The Calponin-homology (CH) domain maps to 6 to 123 (NEMYYSLLEW…RLLQLVLGCA (118 aa)). Coiled coils occupy residues 135–436 (EIMC…KCGH) and 478–588 (QTAL…AKEV).

Belongs to the hook family. Homodimer. Interacts with microtubules via its N-terminus.

It is found in the cytoplasm. The protein localises to the cytoskeleton. Its subcellular location is the endosome. It localises to the synapse. Functionally, involved in endocytic trafficking by stabilizing organelles of the endocytic pathway. Probably acts as a cytoskeletal linker protein required to tether endosome vesicles to the cytoskeleton. Involved in modulation of endocytosis at stages required for down-regulation of membrane proteins that control synapse size. Not involved in synaptic vesicle recycling. Required in R7 cells for boss endocytosis into multivesicular bodies (MVBs). Has a role in regulating adult longevity. The sequence is that of Protein hook from Drosophila pseudoobscura pseudoobscura (Fruit fly).